Consider the following 285-residue polypeptide: Glutamate racemase (285 aa).

Residues 30–31 and 62–63 contribute to the substrate site; these read DS and YG. Cysteine 94 serves as the catalytic Proton donor/acceptor. Position 95–96 (95–96) interacts with substrate; the sequence is NT. Residue cysteine 206 is the Proton donor/acceptor of the active site. Position 207-208 (207-208) interacts with substrate; sequence TH.

It belongs to the aspartate/glutamate racemases family.

The enzyme catalyses L-glutamate = D-glutamate. It functions in the pathway cell wall biogenesis; peptidoglycan biosynthesis. In terms of biological role, provides the (R)-glutamate required for cell wall biosynthesis. In Pectobacterium atrosepticum (strain SCRI 1043 / ATCC BAA-672) (Erwinia carotovora subsp. atroseptica), this protein is Glutamate racemase.